A 156-amino-acid polypeptide reads, in one-letter code: Photosystem I reaction center subunit XI (156 aa).

Transmembrane regions (helical) follow at residues 75 to 95 (GGLL…SLYA) and 128 to 148 (FFIG…ALYF).

Belongs to the PsaL family.

The protein resides in the cellular thylakoid membrane. This chain is Photosystem I reaction center subunit XI, found in Crocosphaera subtropica (strain ATCC 51142 / BH68) (Cyanothece sp. (strain ATCC 51142)).